Consider the following 383-residue polypeptide: tRNA-specific 2-thiouridylase MnmA (383 aa).

ATP is bound by residues 29-36 (GMSGGVDS) and M55. The tract at residues 115-117 (NPD) is interaction with target base in tRNA. C120 serves as the catalytic Nucleophile. The cysteines at positions 120 and 217 are disulfide-linked. G145 is a binding site for ATP. Positions 167–169 (KDQ) are interaction with tRNA. C217 serves as the catalytic Cysteine persulfide intermediate. An interaction with tRNA region spans residues 329–330 (RY).

Belongs to the MnmA/TRMU family.

The protein localises to the cytoplasm. It carries out the reaction S-sulfanyl-L-cysteinyl-[protein] + uridine(34) in tRNA + AH2 + ATP = 2-thiouridine(34) in tRNA + L-cysteinyl-[protein] + A + AMP + diphosphate + H(+). Functionally, catalyzes the 2-thiolation of uridine at the wobble position (U34) of tRNA, leading to the formation of s(2)U34. This Pasteurella multocida (strain Pm70) protein is tRNA-specific 2-thiouridylase MnmA.